We begin with the raw amino-acid sequence, 345 residues long: UDP-3-O-acylglucosamine N-acyltransferase 3 (345 aa).

The Proton acceptor role is filled by H236.

This sequence belongs to the transferase hexapeptide repeat family. LpxD subfamily. In terms of assembly, homotrimer.

It catalyses the reaction a UDP-3-O-[(3R)-3-hydroxyacyl]-alpha-D-glucosamine + a (3R)-hydroxyacyl-[ACP] = a UDP-2-N,3-O-bis[(3R)-3-hydroxyacyl]-alpha-D-glucosamine + holo-[ACP] + H(+). Its pathway is bacterial outer membrane biogenesis; LPS lipid A biosynthesis. In terms of biological role, catalyzes the N-acylation of UDP-3-O-acylglucosamine using 3-hydroxyacyl-ACP as the acyl donor. Is involved in the biosynthesis of lipid A, a phosphorylated glycolipid that anchors the lipopolysaccharide to the outer membrane of the cell. In Gloeobacter violaceus (strain ATCC 29082 / PCC 7421), this protein is UDP-3-O-acylglucosamine N-acyltransferase 3.